Reading from the N-terminus, the 136-residue chain is Large ribosomal subunit protein uL14 (136 aa).

It belongs to the universal ribosomal protein uL14 family.

This is Large ribosomal subunit protein uL14 (rpl23) from Dictyostelium discoideum (Social amoeba).